The primary structure comprises 245 residues: 1-(5-phosphoribosyl)-5-[(5-phosphoribosylamino)methylideneamino] imidazole-4-carboxamide isomerase (245 aa).

The Proton acceptor role is filled by D7. Residue D129 is the Proton donor of the active site.

This sequence belongs to the HisA/HisF family.

The protein resides in the cytoplasm. The catalysed reaction is 1-(5-phospho-beta-D-ribosyl)-5-[(5-phospho-beta-D-ribosylamino)methylideneamino]imidazole-4-carboxamide = 5-[(5-phospho-1-deoxy-D-ribulos-1-ylimino)methylamino]-1-(5-phospho-beta-D-ribosyl)imidazole-4-carboxamide. It functions in the pathway amino-acid biosynthesis; L-histidine biosynthesis; L-histidine from 5-phospho-alpha-D-ribose 1-diphosphate: step 4/9. The chain is 1-(5-phosphoribosyl)-5-[(5-phosphoribosylamino)methylideneamino] imidazole-4-carboxamide isomerase from Salmonella agona (strain SL483).